The primary structure comprises 174 residues: MNYFELFSFTPTYQIDTALLAERYRELQRAVHPDKFANASEQDKRIAVQRTAQVNDGFSTLKDPILRAEHMLSLNGIDLKHESTTVKDTLFLMQQMEWRESLEDISDSSDPDTAISDLHESFSDYAKQIAEELSGLLSSTNEAELIQAADLIRKLKFMAKLQIELERIEDALFE.

In terms of domain architecture, J spans 2–74 (NYFELFSFTP…ILRAEHMLSL (73 aa)).

Belongs to the HscB family. In terms of assembly, interacts with HscA and stimulates its ATPase activity.

Co-chaperone involved in the maturation of iron-sulfur cluster-containing proteins. Seems to help targeting proteins to be folded toward HscA. In Shewanella woodyi (strain ATCC 51908 / MS32), this protein is Co-chaperone protein HscB homolog.